A 385-amino-acid chain; its full sequence is S-adenosylmethionine synthase (385 aa).

Residue H15 participates in ATP binding. Residue D17 participates in Mg(2+) binding. K(+) is bound at residue E43. L-methionine is bound by residues E56 and Q99. The tract at residues 99–109 (QSPDINQGVDR) is flexible loop. ATP contacts are provided by residues 164–166 (DAK), 230–231 (RF), D239, 245–246 (RK), A262, and K266. Position 239 (D239) interacts with L-methionine. K270 provides a ligand contact to L-methionine.

Belongs to the AdoMet synthase family. Homotetramer; dimer of dimers. Requires Mg(2+) as cofactor. The cofactor is K(+).

Its subcellular location is the cytoplasm. It carries out the reaction L-methionine + ATP + H2O = S-adenosyl-L-methionine + phosphate + diphosphate. The protein operates within amino-acid biosynthesis; S-adenosyl-L-methionine biosynthesis; S-adenosyl-L-methionine from L-methionine: step 1/1. Functionally, catalyzes the formation of S-adenosylmethionine (AdoMet) from methionine and ATP. The overall synthetic reaction is composed of two sequential steps, AdoMet formation and the subsequent tripolyphosphate hydrolysis which occurs prior to release of AdoMet from the enzyme. The sequence is that of S-adenosylmethionine synthase from Sodalis glossinidius (strain morsitans).